Here is a 291-residue protein sequence, read N- to C-terminus: MKSQFRHVALIGKYHAQGSRSALEDIAHFLGTQGCDVAIEQDTASNTGLTQFPTLDAAGIGAQCDLALVVGGDGTMLGIGRLLAQFGIPLVGINQGRLGFITDIAFEDYQDTLKPMLRGEFEEDRRWMMQAKVVRDGRCVFSATAMNDVVVNRGATAGMVELRVEVDGRFVANQRADGLIIASPTGSTAYALSAGGPLLHPSIPGWVLVPIAPHTLSNRPIVLSDAGEITVEIVAGRDASANFDMQSLATLLHGDRITVRRSEHQMRFLHPKGWSYFDTLRKKLHWNEGVA.

The Proton acceptor role is filled by Asp-73. Residues 73–74 (DG), 147–148 (ND), Arg-175, Asp-177, 188–193 (TAYALS), Ala-212, and Gln-246 contribute to the NAD(+) site.

It belongs to the NAD kinase family. Requires a divalent metal cation as cofactor.

The protein resides in the cytoplasm. The enzyme catalyses NAD(+) + ATP = ADP + NADP(+) + H(+). Functionally, involved in the regulation of the intracellular balance of NAD and NADP, and is a key enzyme in the biosynthesis of NADP. Catalyzes specifically the phosphorylation on 2'-hydroxyl of the adenosine moiety of NAD to yield NADP. In Polaromonas sp. (strain JS666 / ATCC BAA-500), this protein is NAD kinase.